The chain runs to 266 residues: uncharacterized protein (266 aa).

This is an uncharacterized protein from Methanocaldococcus jannaschii (strain ATCC 43067 / DSM 2661 / JAL-1 / JCM 10045 / NBRC 100440) (Methanococcus jannaschii).